Consider the following 157-residue polypeptide: 3-hydroxyacyl-[acyl-carrier-protein] dehydratase FabZ (157 aa).

His-58 is an active-site residue.

The protein belongs to the thioester dehydratase family. FabZ subfamily.

The protein resides in the cytoplasm. It carries out the reaction a (3R)-hydroxyacyl-[ACP] = a (2E)-enoyl-[ACP] + H2O. Its function is as follows. Involved in unsaturated fatty acids biosynthesis. Catalyzes the dehydration of short chain beta-hydroxyacyl-ACPs and long chain saturated and unsaturated beta-hydroxyacyl-ACPs. This is 3-hydroxyacyl-[acyl-carrier-protein] dehydratase FabZ from Brucella melitensis biotype 2 (strain ATCC 23457).